We begin with the raw amino-acid sequence, 23 residues long: uncharacterized protein (23 aa).

The protein localises to the plastid. It localises to the chloroplast. This is an uncharacterized protein from Zea mays (Maize).